The following is a 329-amino-acid chain: Glutamine synthetase (329 aa).

The region spanning 4–86 (YKLEYIWLDA…VMCEVMMPDA (83 aa)) is the GS beta-grasp domain. Positions 89 to 329 (PHASNTRATV…GDPYQMLLSS (241 aa)) constitute a GS catalytic domain. Residues Glu109 and Glu111 each coordinate Mg(2+). Residue Glu167 coordinates ATP. 2 residues coordinate Mg(2+): Glu172 and Glu179. Glu278 serves as a coordination point for L-glutamate.

It belongs to the glutamine synthetase family. Homooctamer and homotetramer. It depends on Mg(2+) as a cofactor.

The protein resides in the cytoplasm. It carries out the reaction L-glutamate + NH4(+) + ATP = L-glutamine + ADP + phosphate + H(+). Catalyzes the ATP-dependent biosynthesis of glutamine from glutamate and ammonia. The protein is Glutamine synthetase of Rhizobium meliloti (Ensifer meliloti).